A 369-amino-acid chain; its full sequence is Putative esterase slr0264 (369 aa).

Catalysis depends on charge relay system residues Ser162, Asp303, and His334.

This sequence belongs to the AB hydrolase superfamily. AB hydrolase 4 family.

The protein is Putative esterase slr0264 of Synechocystis sp. (strain ATCC 27184 / PCC 6803 / Kazusa).